Reading from the N-terminus, the 59-residue chain is Large ribosomal subunit protein uL30 (59 aa).

Belongs to the universal ribosomal protein uL30 family. In terms of assembly, part of the 50S ribosomal subunit.

The polypeptide is Large ribosomal subunit protein uL30 (Photorhabdus laumondii subsp. laumondii (strain DSM 15139 / CIP 105565 / TT01) (Photorhabdus luminescens subsp. laumondii)).